Reading from the N-terminus, the 185-residue chain is Serine/arginine-rich splicing factor RSZ21A (185 aa).

The RRM domain occupies 2 to 73; the sequence is ARVYVGNLDP…WRVELSRNAS (72 aa). The segment at 87–104 adopts a CCHC-type zinc-finger fold; that stretch reads SKCYECGETGHFARECRL. The disordered stretch occupies residues 109 to 185; it reads GGLGSGRRRS…YDNGYRRSRS (77 aa). Basic residues predominate over residues 114-131; it reads GRRRSRSRSRSRSPRYRR. 2 stretches are compositionally biased toward low complexity: residues 132–145 and 152–163; these read SPSY…PAGR and VSPARARSYSRS.

Belongs to the splicing factor SR family. In terms of processing, extensively phosphorylated on serine residues in the RS domain. As to expression, expressed in roots, leaves and immature seeds.

The protein resides in the nucleus. In terms of biological role, involved in pre-mRNA splicing. This chain is Serine/arginine-rich splicing factor RSZ21A (RSZ21A), found in Oryza sativa subsp. japonica (Rice).